Here is a 98-residue protein sequence, read N- to C-terminus: Ferredoxin-like protein (98 aa).

The 4Fe-4S ferredoxin-type domain occupies 57-87; the sequence is GQVEVTADGCMECGTCRVLCEANGDVEWSYP.

The protein to ferredoxins from P.putida and C.tartarivorum, ferredoxin I from A.vinelandii, ferredoxin II from D.desulfuricans.

Could be a 3Fe-4S cluster-containing protein. The chain is Ferredoxin-like protein (fixX) from Rhizobium meliloti (strain 1021) (Ensifer meliloti).